Here is a 319-residue protein sequence, read N- to C-terminus: Probable deoxyhypusine synthase (319 aa).

The Nucleophile role is filled by Lys-287.

It belongs to the deoxyhypusine synthase family. NAD(+) is required as a cofactor.

It catalyses the reaction [eIF5A protein]-L-lysine + spermidine = [eIF5A protein]-deoxyhypusine + propane-1,3-diamine. It functions in the pathway protein modification; eIF5A hypusination. Functionally, catalyzes the NAD-dependent oxidative cleavage of spermidine and the subsequent transfer of the butylamine moiety of spermidine to the epsilon-amino group of a specific lysine residue of the eIF-5A precursor protein to form the intermediate deoxyhypusine residue. In Ignicoccus hospitalis (strain KIN4/I / DSM 18386 / JCM 14125), this protein is Probable deoxyhypusine synthase.